The sequence spans 307 residues: Mitochondrial brown fat uncoupling protein 1 (307 aa).

Over Val-2–His-10 the chain is Mitochondrial intermembrane. A helical transmembrane segment spans residues Pro-11 to Phe-32. 3 Solcar repeats span residues Pro-11 to Tyr-102, Pro-111 to Ala-201, and Asp-210 to Glu-295. The Mitochondrial matrix portion of the chain corresponds to Pro-33–Lys-73. Lys-56 lines the fatty acid 16:0 pocket. Residues Leu-74 to Tyr-96 traverse the membrane as a helical segment. Over Asp-97–Arg-116 the chain is Mitochondrial intermembrane. A helical transmembrane segment spans residues Ile-117–Pro-133. Residues Thr-134–Thr-178 are Mitochondrial matrix-facing. The helical transmembrane segment at Pro-179 to Tyr-195 threads the bilayer. Topologically, residues Asp-196 to Val-212 are mitochondrial intermembrane. Residues Pro-213–Pro-232 traverse the membrane as a helical segment. The Mitochondrial matrix segment spans residues Ala-233–Ala-266. Residue Cys-254 is modified to Cysteine sulfenic acid (-SOH). A helical transmembrane segment spans residues Phe-267–Phe-289. Position 269 (Lys-269) interacts with fatty acid 16:0. Over Glu-290–Thr-307 the chain is Mitochondrial intermembrane.

The protein belongs to the mitochondrial carrier (TC 2.A.29) family. Most probably functions as a monomer. Binds one purine nucleotide per monomer. However, has also been suggested to function as a homodimer or a homotetramer. Tightly associates with cardiolipin in the mitochondrion inner membrane; may stabilize and regulate its activity. In terms of processing, may undergo sulfenylation upon cold exposure. May increase the sensitivity of UCP1 thermogenic function to the activation by noradrenaline probably through structural effects. May undergo ubiquitin-mediated proteasomal degradation. In terms of tissue distribution, brown adipose tissue.

The protein localises to the mitochondrion inner membrane. It carries out the reaction H(+)(in) = H(+)(out). With respect to regulation, has no constitutive proton transporter activity and has to be activated by long-chain fatty acids/LCFAs. Inhibited by purine nucleotides. Both purine nucleotides and LCFAs bind the cytosolic side of the transporter and directly compete to activate or inhibit it. Activated by noradrenaline and reactive oxygen species. Despite lacking canonical translational encoding for selenocysteine, a small pool of the protein has been observed to selectively incorporate selenocysteine at 'Cys-254'. Selenocysteine-modified protein is highly sensitive to redox modification and may constitute a pool of protein highly sensitive to activation by elevated levels of reactive oxygen species (ROS). Mitochondrial protein responsible for thermogenic respiration, a specialized capacity of brown adipose tissue and beige fat that participates in non-shivering adaptive thermogenesis to temperature and diet variations and more generally to the regulation of energy balance. Functions as a long-chain fatty acid/LCFA and proton symporter, simultaneously transporting one LCFA and one proton through the inner mitochondrial membrane. However, LCFAs remaining associated with the transporter via their hydrophobic tails, it results in an apparent transport of protons activated by LCFAs. Thereby, dissipates the mitochondrial proton gradient and converts the energy of substrate oxydation into heat instead of ATP. Regulates the production of reactive oxygen species/ROS by mitochondria. The chain is Mitochondrial brown fat uncoupling protein 1 from Mesocricetus auratus (Golden hamster).